Consider the following 303-residue polypeptide: Succinate--CoA ligase [ADP-forming] subunit alpha (303 aa).

CoA is bound by residues 20 to 23 (TGSE), Lys46, and 108 to 110 (ITE). Position 173 (Tyr173) interacts with substrate. Residue His259 is the Tele-phosphohistidine intermediate of the active site.

Belongs to the succinate/malate CoA ligase alpha subunit family. Heterotetramer of two alpha and two beta subunits.

It catalyses the reaction succinate + ATP + CoA = succinyl-CoA + ADP + phosphate. The catalysed reaction is GTP + succinate + CoA = succinyl-CoA + GDP + phosphate. The protein operates within carbohydrate metabolism; tricarboxylic acid cycle; succinate from succinyl-CoA (ligase route): step 1/1. Succinyl-CoA synthetase functions in the citric acid cycle (TCA), coupling the hydrolysis of succinyl-CoA to the synthesis of either ATP or GTP and thus represents the only step of substrate-level phosphorylation in the TCA. The alpha subunit of the enzyme binds the substrates coenzyme A and phosphate, while succinate binding and nucleotide specificity is provided by the beta subunit. In Mycobacterium bovis (strain ATCC BAA-935 / AF2122/97), this protein is Succinate--CoA ligase [ADP-forming] subunit alpha.